We begin with the raw amino-acid sequence, 114 residues long: Iron-sulfur cluster insertion protein ErpA (114 aa).

Iron-sulfur cluster-binding residues include Cys42, Cys106, and Cys108.

It belongs to the HesB/IscA family. Homodimer. Iron-sulfur cluster serves as cofactor.

Its function is as follows. Required for insertion of 4Fe-4S clusters for at least IspG. The protein is Iron-sulfur cluster insertion protein ErpA of Erwinia tasmaniensis (strain DSM 17950 / CFBP 7177 / CIP 109463 / NCPPB 4357 / Et1/99).